Reading from the N-terminus, the 230-residue chain is Antiholin-like protein LrgB (230 aa).

Transmembrane regions (helical) follow at residues 5 to 25 (MTPY…TLLF), 30 to 50 (GFFL…FLKV), 61 to 81 (GGKM…IPLY), 92 to 112 (WQIL…VFIV), 149 to 169 (ITSF…ALFL), 177 to 197 (PIAK…AVGI), and 209 to 229 (IAVT…MPFI).

It belongs to the CidB/LrgB family. LrgB subfamily.

The protein resides in the cell membrane. Inhibits the expression or activity of extracellular murein hydrolases by interacting, possibly with LrgA, with the holin-like protein CidA. The LrgAB and CidA proteins may affect the proton motive force of the membrane. May be involved in programmed cell death (PCD), possibly triggering PCD in response to antibiotics and environmental stresses. This is Antiholin-like protein LrgB from Bacillus cereus (strain Q1).